A 166-amino-acid chain; its full sequence is Minor capsid protein VP2 (166 aa).

The interval 138 to 166 (PAPSGFVNPNYQPSPPRLKLGPRPPSTNV) is disordered. The segment covering 149 to 166 (QPSPPRLKLGPRPPSTNV) has biased composition (pro residues).

It belongs to the vesivirus VP2 protein family. Homooligomer. The portal-like structure consists in 12 copies of VP2. Interacts with capsid protein VP1.

The protein resides in the virion. The protein localises to the host cytoplasm. Its function is as follows. Minor structural protein that forms a portal-like structure at a unique three-fold axis of symmetry, following binding to the host receptor. The channel formed by VP2 may allow the delivery of the viral genome through the host endosomal membrane. The chain is Minor capsid protein VP2 from Homo sapiens (Human).